Here is a 364-residue protein sequence, read N- to C-terminus: Very-long-chain (3R)-3-hydroxyacyl-CoA dehydratase 3 (364 aa).

The Cytoplasmic segment spans residues 1-151; it reads MAMENQVLTP…ETLTNLRKGY (151 aa). The region spanning 7–96 is the CS domain; sequence VLTPHVYWAQ…KVSQWWERLT (90 aa). T9 carries the post-translational modification Phosphothreonine. The stretch at 113-138 forms a coiled coil; it reads LDESDAEMELRAKEEERLNKLRLESE. 2 positions are modified to phosphoserine: S116 and S137. A helical membrane pass occupies residues 152–172; that stretch reads LFMYNLVQFLGFSWIFVNLTV. At 173–191 the chain is on the lumenal side; sequence RFCILGKESFYDTFHTVAD. A helical transmembrane segment spans residues 192–212; sequence MMYFCQMLAVVETINAAIGVT. The Cytoplasmic portion of the chain corresponds to 213–214; sequence TS. The helical transmembrane segment at 215–235 threads the bilayer; that stretch reads PVLPSLIQLLGRNFILFIIFG. The Lumenal portion of the chain corresponds to 236–244; it reads TMEEMQNKA. A helical transmembrane segment spans residues 245 to 265; it reads VVFFVFYLWSAIEIFRYSFYM. At 266–282 the chain is on the cytoplasmic side; it reads LTCIDMDWEVLTWLRYT. The chain crosses the membrane as a helical span at residues 283-303; the sequence is LWIPLYPLGCLAEAVSVVQSI. Catalysis depends on residues Y288 and E295. Residues 304 to 324 lie on the Lumenal side of the membrane; sequence PIFNETGRFSFTLPYPVKIKV. The chain crosses the membrane as a helical span at residues 325–345; sequence RFSFFLQIYLIMIFLGLYINF. The Cytoplasmic segment spans residues 346–364; that stretch reads RHLYKQRRRRYGQKKKKIH.

This sequence belongs to the very long-chain fatty acids dehydratase HACD family. As to quaternary structure, may interact with enzymes of the ELO family (including ELOVL1); with those enzymes that mediate condensation, the first of the four steps of the reaction cycle responsible for fatty acids elongation, may be part of a larger fatty acids elongase complex. Interacts with RAC1.

It is found in the endoplasmic reticulum membrane. The catalysed reaction is a very-long-chain (3R)-3-hydroxyacyl-CoA = a very-long-chain (2E)-enoyl-CoA + H2O. It catalyses the reaction (3R)-hydroxyhexadecanoyl-CoA = (2E)-hexadecenoyl-CoA + H2O. The protein operates within lipid metabolism; fatty acid biosynthesis. Functionally, catalyzes the third of the four reactions of the long-chain fatty acids elongation cycle. This endoplasmic reticulum-bound enzymatic process, allows the addition of two carbons to the chain of long- and very long-chain fatty acids/VLCFAs per cycle. This enzyme catalyzes the dehydration of the 3-hydroxyacyl-CoA intermediate into trans-2,3-enoyl-CoA, within each cycle of fatty acid elongation. Thereby, it participates in the production of VLCFAs of different chain lengths that are involved in multiple biological processes as precursors of membrane lipids and lipid mediators. Involved in Rac1-signaling pathways leading to the modulation of gene expression. This chain is Very-long-chain (3R)-3-hydroxyacyl-CoA dehydratase 3, found in Pongo abelii (Sumatran orangutan).